The chain runs to 381 residues: RxLR effector protein 54 (381 aa).

An N-terminal signal peptide occupies residues 1–19; that stretch reads MRFQSIMMLTITCAGTCLA. Positions 57–75 match the RxLR-dEER motif; sequence RFLRFDTVARDTAGNDEER. 5 WY-domain regions span residues 97–150, 151–198, 199–247, 251–299, and 302–354; these read SAEE…ANNG, NQAF…SLSG, NWIR…WNKN, FFGD…LLTS, and SHKT…RDKI. The short motif at 372–381 is the ATG8 interacting motif element; it reads KPLDFDWEIV.

This sequence belongs to the RxLR effector family. Interacts via its C-terminal AIM with host ATG8CL.

It localises to the secreted. Its subcellular location is the host nucleus. It is found in the host cytoplasm. Effector that specifically binds host autophagy protein ATG8CL of the ATG8 family to stimulate autophagosome formation and subsequent autophagy rather than blocking autophagic flux. The pathogen remodels host-microbe interface by co-opting the host autophagy machinery which plays a key role in plant immunity. PexRD54 competes with the autophagy cargo receptor Joka2 to deplete it out of ATG8CL complexes and interferes with Joka2's positive effect on pathogen defense. The protein is RxLR effector protein 54 of Phytophthora infestans (strain T30-4) (Potato late blight agent).